The following is a 177-amino-acid chain: Small ribosomal subunit protein uS5 (177 aa).

Residues 21-84 (LKEKMVSVNR…DEARQRMVRV (64 aa)) enclose the S5 DRBM domain.

It belongs to the universal ribosomal protein uS5 family. As to quaternary structure, part of the 30S ribosomal subunit. Contacts proteins S4 and S8.

Its function is as follows. With S4 and S12 plays an important role in translational accuracy. Located at the back of the 30S subunit body where it stabilizes the conformation of the head with respect to the body. The polypeptide is Small ribosomal subunit protein uS5 (Nitrosomonas europaea (strain ATCC 19718 / CIP 103999 / KCTC 2705 / NBRC 14298)).